Here is a 415-residue protein sequence, read N- to C-terminus: ATP-dependent RNA helicase RhlB (415 aa).

The short motif at 9–37 is the Q motif element; the sequence is KKFSDFALYPPIVEVLDSKGFNNCTPIQA. The region spanning 40-219 is the Helicase ATP-binding domain; the sequence is LPTTLAGKDV…FEHMNNAEYV (180 aa). 53–60 lines the ATP pocket; sequence AQTGTGKT. Positions 165-168 match the DEAD box motif; sequence DEAD. The 146-residue stretch at 245-390 folds into the Helicase C-terminal domain; sequence RLLQTLIEEE…VSKYNSDALL (146 aa). Residues 396-415 are disordered; the sequence is PKRLTRRRSGAPRHNRKRPG. The segment covering 398–415 has biased composition (basic residues); sequence RLTRRRSGAPRHNRKRPG.

This sequence belongs to the DEAD box helicase family. RhlB subfamily. In terms of assembly, component of the RNA degradosome, which is a multiprotein complex involved in RNA processing and mRNA degradation.

The protein localises to the cytoplasm. It catalyses the reaction ATP + H2O = ADP + phosphate + H(+). In terms of biological role, DEAD-box RNA helicase involved in RNA degradation. Has RNA-dependent ATPase activity and unwinds double-stranded RNA. In Sodalis glossinidius (strain morsitans), this protein is ATP-dependent RNA helicase RhlB.